We begin with the raw amino-acid sequence, 248 residues long: mRNA-decapping protein OPG122 (248 aa).

The 183-residue stretch at His45–Lys227 folds into the Nudix hydrolase domain. The Nudix box signature appears at Gly126–Asn147. Glu132 contacts Mg(2+). Glu141 (nucleophile) is an active-site residue. Position 145 (Glu145) interacts with Mn(2+). Position 167 (Asp167) interacts with Mg(2+).

It belongs to the Nudix hydrolase family. Mg(2+) serves as cofactor. Requires Mn(2+) as cofactor.

The protein localises to the host mitochondrion. Functionally, decapping enzyme that remove the protective 5'-cap from both host and viral mRNAs to commit transcripts for decay by the cellular exonuclease XRN1. Preferentially targets spliced mRNAs and since all viral genes are intronless, it preferentially targets host over viral transcripts. Acceleration of the turnover of cellular transcripts promotes the shutoff of host protein synthesis and therefore diminish the magnitude of antiviral response. The sequence is that of mRNA-decapping protein OPG122 (OPG122) from Vaccinia virus (strain Copenhagen) (VACV).